The chain runs to 63 residues: U2-agatoxin-Ao1v (63 aa).

The signal sequence occupies residues 1 to 14 (LLLISAMVGSMIAA). A propeptide spanning residues 15–28 (VPEEESLQLSEDER) is cleaved from the precursor. Disulfide bonds link Cys-31–Cys-47, Cys-38–Cys-52, and Cys-46–Cys-62.

This sequence belongs to the neurotoxin 01 (U2-agtx) family. As to expression, expressed by the venom gland.

It is found in the secreted. Insect active toxin causing rapid but reversible paralysis in crickets. No activity shown in mammals. Does not show effect on mammalian voltage-gated calcium channels. This Agelena orientalis (Funnel-web spider) protein is U2-agatoxin-Ao1v.